Consider the following 85-residue polypeptide: Small ribosomal subunit protein bS16 (85 aa).

It belongs to the bacterial ribosomal protein bS16 family.

The polypeptide is Small ribosomal subunit protein bS16 (Acinetobacter baylyi (strain ATCC 33305 / BD413 / ADP1)).